The sequence spans 94 residues: Selenoprotein K (94 aa).

A helical transmembrane segment spans residues 20 to 42 (LSLITDFFWGIAEFVVLFFKTLL). The interval 48–94 (KRRSYGNSSDSRYDDGRGPPGNPPRRMGRINHLRGPSPPPMAGGUGR) is disordered. U92 is a non-standard amino acid (selenocysteine).

This sequence belongs to the selenoprotein K family. Interacts with DERL1, DERL2, DERL3 and SELENOS. The SELENOK-SELENOS complex interacts with VCP. Interacts with ZDHHC6. Cleaved by CAPN2/m-calpain in resting macrophages but not in activated macrophages. Macrophage activation up-regulates expression of the calpain inhibitor CAST/calpastatin, resulting in inhibition of CAPN2 activity. Post-translationally, truncated SELENOK proteins produced by failed UGA/Sec decoding are ubiquitinated by the CRL2(KLHDC2) complex, which recognizes the diglycine (Gly-Gly) at the C-terminus of truncated SELENOK proteins. As to expression, highly expressed in heart.

The protein resides in the endoplasmic reticulum membrane. It is found in the cell membrane. In terms of biological role, required for Ca(2+) flux in immune cells and plays a role in T-cell proliferation and in T-cell and neutrophil migration. Involved in endoplasmic reticulum-associated degradation (ERAD) of soluble glycosylated proteins. Required for palmitoylation and cell surface expression of CD36 and involved in macrophage uptake of low-density lipoprotein and in foam cell formation. Together with ZDHHC6, required for palmitoylation of ITPR1 in immune cells, leading to regulate ITPR1 stability and function. Plays a role in protection of cells from ER stress-induced apoptosis. Protects cells from oxidative stress when overexpressed in cardiomyocytes. The sequence is that of Selenoprotein K from Homo sapiens (Human).